We begin with the raw amino-acid sequence, 160 residues long: Small ribosomal subunit protein uS7 (160 aa).

It belongs to the universal ribosomal protein uS7 family. Part of the 30S ribosomal subunit. Contacts proteins S9 and S11.

Functionally, one of the primary rRNA binding proteins, it binds directly to 16S rRNA where it nucleates assembly of the head domain of the 30S subunit. Is located at the subunit interface close to the decoding center, probably blocks exit of the E-site tRNA. The sequence is that of Small ribosomal subunit protein uS7 from Rickettsia massiliae (strain Mtu5).